The following is a 353-amino-acid chain: Glutamine synthetase nodule isozyme (353 aa).

The 81-residue stretch at 19-99 folds into the GS beta-grasp domain; sequence IIAEYIWVGG…VMCDTYTPAG (81 aa). Residues 106–353 enclose the GS catalytic domain; that stretch reads KRHAAAKIFS…TSMIAETTLL (248 aa).

This sequence belongs to the glutamine synthetase family. As to quaternary structure, homooctamer.

Its subcellular location is the cytoplasm. The catalysed reaction is L-glutamate + NH4(+) + ATP = L-glutamine + ADP + phosphate + H(+). This Lupinus luteus (European yellow lupine) protein is Glutamine synthetase nodule isozyme.